Reading from the N-terminus, the 252-residue chain is Fluoroquinolones export permease protein MT2760 (252 aa).

The next 6 helical transmembrane spans lie at 31–51 (VMLVIAPVIWTTGVALLTPLF), 69–89 (LILTAFLLLTSIIVAGALAAF), 119–139 (ATVMVVTTIYVVATMSCSGIL), 148–168 (IPIGLVAGLSAVVTLLLILAV), 176–196 (LAMVRALGMLIAGLPCLPWFI), and 224–244 (TWWPYLVGGAVYNLAIVWVLF).

As to quaternary structure, the complex is composed of 2 ATP-binding proteins and 2 transmembrane proteins.

The protein localises to the cell membrane. Part of the ABC transporter complex involved in fluoroquinolones export. Probably responsible for the translocation of the substrate across the membrane. This chain is Fluoroquinolones export permease protein MT2760, found in Mycobacterium tuberculosis (strain CDC 1551 / Oshkosh).